A 107-amino-acid polypeptide reads, in one-letter code: Putative double-stranded DNA mimic protein HS_0995 (107 aa).

The protein belongs to the putative dsDNA mimic protein family.

Its function is as follows. May act as a double-stranded DNA (dsDNA) mimic. Probably regulates the activity of a dsDNA-binding protein. In Histophilus somni (strain 129Pt) (Haemophilus somnus), this protein is Putative double-stranded DNA mimic protein HS_0995.